We begin with the raw amino-acid sequence, 394 residues long: Elongation factor Tu 1 (394 aa).

A tr-type G domain is found at 10-204 (KPHVNVGTIG…ALDSYIPEPE (195 aa)). A G1 region spans residues 19 to 26 (GHVDHGKT). A GTP-binding site is contributed by 19–26 (GHVDHGKT). Thr-26 contacts Mg(2+). A G2 region spans residues 60 to 64 (GITIN). The G3 stretch occupies residues 81-84 (DCPG). GTP-binding positions include 81–85 (DCPGH) and 136–139 (NKCD). Positions 136–139 (NKCD) are G4. The segment at 174-176 (SAL) is G5.

Belongs to the TRAFAC class translation factor GTPase superfamily. Classic translation factor GTPase family. EF-Tu/EF-1A subfamily. In terms of assembly, monomer.

It localises to the cytoplasm. The catalysed reaction is GTP + H2O = GDP + phosphate + H(+). In terms of biological role, GTP hydrolase that promotes the GTP-dependent binding of aminoacyl-tRNA to the A-site of ribosomes during protein biosynthesis. The polypeptide is Elongation factor Tu 1 (Shewanella oneidensis (strain ATCC 700550 / JCM 31522 / CIP 106686 / LMG 19005 / NCIMB 14063 / MR-1)).